A 605-amino-acid chain; its full sequence is Probable serine/threonine-protein kinase DDB_G0286481 (605 aa).

The chain crosses the membrane as a helical span at residues 5-25 (YQIFFLLYLLCILYVISCGYI). Asn53 carries an N-linked (GlcNAc...) asparagine glycan. 2 stretches are compositionally biased toward low complexity: residues 54–81 (SSNNNNNNNNNNNNNNNNNNNNNNNNNN) and 89–104 (NCNNNSSNNNSDNKSN). Residues 54–170 (SSNNNNNNNN…LGGSMGSGSQ (117 aa)) are disordered. N-linked (GlcNAc...) asparagine glycans are attached at residues Asn92, Asn93, Asn97, and Asn101. Residues 105-123 (IKNKQHHHHSNFRNRRGKS) show a composition bias toward basic residues. An N-linked (GlcNAc...) asparagine glycan is attached at Asn127. Residues 144 to 155 (QSSSYDTSELHQ) are compositionally biased toward polar residues. N-linked (GlcNAc...) asparagine glycosylation occurs at Asn280. Residues 312-597 (YEVIQKIGRG…AKEAMKHPYF (286 aa)) form the Protein kinase domain. ATP-binding positions include 318–326 (IGRGKYSEV) and Lys341. N-linked (GlcNAc...) asparagine glycosylation is present at Asn390. Asp429 acts as the Proton acceptor in catalysis. N-linked (GlcNAc...) asparagine glycosylation is present at Asn601.

The protein belongs to the protein kinase superfamily. CMGC Ser/Thr protein kinase family.

It localises to the membrane. It carries out the reaction L-seryl-[protein] + ATP = O-phospho-L-seryl-[protein] + ADP + H(+). The catalysed reaction is L-threonyl-[protein] + ATP = O-phospho-L-threonyl-[protein] + ADP + H(+). The protein is Probable serine/threonine-protein kinase DDB_G0286481 of Dictyostelium discoideum (Social amoeba).